The sequence spans 195 residues: 2-hydroxychromene-2-carboxylate isomerase (195 aa).

Residue Ser-13 is the Nucleophile of the active site. Position 13 (Ser-13) interacts with glutathione. Substrate-binding positions include Lys-45 and 55–56 (NR). Residue 181–184 (WGND) coordinates glutathione.

Belongs to the GST superfamily. NadH family. Glutathione is required as a cofactor.

The catalysed reaction is 2-hydroxychromene-2-carboxylate = (3E)-4-(2-hydroxyphenyl)-2-oxobut-3-enoate. Its activity is regulated as follows. Activated by salicylate. Functionally, involved in the naphthalene and naphthalenesulfonate catabolic pathway. Catalyzes the reversible glutathione-dependent isomerization of 2-hydroxychromene-2-carboxylate (HCCA) to trans-O-hydroxybenzylidenepyruvate (THBPA). It can also use 2-hydroxybenzo[g]chromene-2-carboxylate as substrate. The chain is 2-hydroxychromene-2-carboxylate isomerase (nsaD) from Sphingobium xenophagum.